The following is a 392-amino-acid chain: Formate-dependent phosphoribosylglycinamide formyltransferase (392 aa).

N(1)-(5-phospho-beta-D-ribosyl)glycinamide is bound by residues 22 to 23 (EL) and glutamate 82. Residues arginine 114, lysine 155, 160-165 (SSGKGQ), 195-198 (EGVV), and glutamate 203 each bind ATP. Residues 119–308 (RLAAEELQLP…EFALHVRAFL (190 aa)) form the ATP-grasp domain. Mg(2+)-binding residues include glutamate 267 and glutamate 279. N(1)-(5-phospho-beta-D-ribosyl)glycinamide contacts are provided by residues aspartate 286, lysine 355, and 362-363 (RR).

The protein belongs to the PurK/PurT family. As to quaternary structure, homodimer.

It carries out the reaction N(1)-(5-phospho-beta-D-ribosyl)glycinamide + formate + ATP = N(2)-formyl-N(1)-(5-phospho-beta-D-ribosyl)glycinamide + ADP + phosphate + H(+). It participates in purine metabolism; IMP biosynthesis via de novo pathway; N(2)-formyl-N(1)-(5-phospho-D-ribosyl)glycinamide from N(1)-(5-phospho-D-ribosyl)glycinamide (formate route): step 1/1. In terms of biological role, involved in the de novo purine biosynthesis. Catalyzes the transfer of formate to 5-phospho-ribosyl-glycinamide (GAR), producing 5-phospho-ribosyl-N-formylglycinamide (FGAR). Formate is provided by PurU via hydrolysis of 10-formyl-tetrahydrofolate. This is Formate-dependent phosphoribosylglycinamide formyltransferase from Klebsiella pneumoniae (strain 342).